Reading from the N-terminus, the 134-residue chain is Arsenate reductase (134 aa).

Catalysis depends on nucleophile residues C11, C83, and C90. Disulfide bonds link C11–C83 and C83–C90.

Belongs to the low molecular weight phosphotyrosine protein phosphatase family. Thioredoxin-coupled ArsC subfamily.

The protein resides in the cytoplasm. It catalyses the reaction arsenate + [thioredoxin]-dithiol + H(+) = arsenite + [thioredoxin]-disulfide + H2O. Functionally, catalyzes the reduction of arsenate [As(V)] to arsenite [As(III)]. The chain is Arsenate reductase from Bacillus cereus (strain G9842).